A 545-amino-acid polypeptide reads, in one-letter code: Glucose-6-phosphate isomerase (545 aa).

Residue E351 is the Proton donor of the active site. Active-site residues include H382 and K510.

The protein belongs to the GPI family.

The protein resides in the cytoplasm. It carries out the reaction alpha-D-glucose 6-phosphate = beta-D-fructose 6-phosphate. It functions in the pathway carbohydrate biosynthesis; gluconeogenesis. Its pathway is carbohydrate degradation; glycolysis; D-glyceraldehyde 3-phosphate and glycerone phosphate from D-glucose: step 2/4. Catalyzes the reversible isomerization of glucose-6-phosphate to fructose-6-phosphate. The protein is Glucose-6-phosphate isomerase of Helicobacter pylori (strain Shi470).